Reading from the N-terminus, the 378-residue chain is MVKINASAITYTKGGEISKILSGTGFSIDTETLGPKQVVIQALATPINPSDLNQLAGTYASKPNFTSELDTPVPVAIGGNEGLYKVIEVGSDVTSYKNGDWVIPKMPSFGTWRTHALVTLDKPENPDPFIKVSSEDDKSIDLTQAATVSINPSTAYQLIDQFIKDWDPKGNDWIIQNGGNSQVGKFVVQIAKIRNIKTISVIRDGKPDQDQIVKELLDLGATKVITDKEAESEEYINKIVPGWVNEGKVILALNCVCGKSGSALVSHLTGNHLADYRSPHLVTYGGMSGQPLMYSSSESLFKNVTSKAYWLTANTKRNPQSKVDTVKKVLALYKSGDIKPVPFNGKEFNIKSTSDDYIKLFLKGIAESKTGKQVIVYN.

Residue Tyr-59 is the Proton donor of the active site. NADP(+) contacts are provided by residues Asn-151, 180–183 (NSQV), 203–206 (RDGK), 284–287 (YGGM), 309–311 (YWL), and Lys-372.

The protein belongs to the zinc-containing alcohol dehydrogenase family. Quinone oxidoreductase subfamily. In terms of assembly, homodimer.

Its subcellular location is the mitochondrion matrix. It catalyses the reaction a 2,3-saturated acyl-[ACP] + NADP(+) = a (2E)-enoyl-[ACP] + NADPH + H(+). Its function is as follows. Catalyzes the NADPH-dependent reduction of trans-2-enoyl thioesters in mitochondrial fatty acid synthesis (fatty acid synthesis type II). Fatty acid chain elongation in mitochondria uses acyl carrier protein (ACP) as an acyl group carrier, but the enzyme accepts both ACP and CoA thioesters as substrates in vitro. Required for respiration and the maintenance of the mitochondrial compartment. The protein is Enoyl-[acyl-carrier-protein] reductase 1, mitochondrial (ETR1) of Debaryomyces hansenii (strain ATCC 36239 / CBS 767 / BCRC 21394 / JCM 1990 / NBRC 0083 / IGC 2968) (Yeast).